A 77-amino-acid chain; its full sequence is MQVLVRDNNVDQALRALKKKMQREGIFREMKMRGYYEKPSEKRAREKAEAIRRTRKLARKRAQREGIVSNGRTASVR.

The segment covering Lys38–Arg52 has biased composition (basic and acidic residues). Residues Lys38–Arg77 are disordered. Residues Arg53–Ala62 show a composition bias toward basic residues.

It belongs to the bacterial ribosomal protein bS21 family.

The sequence is that of Small ribosomal subunit protein bS21 from Bartonella bacilliformis (strain ATCC 35685 / KC583 / Herrer 020/F12,63).